We begin with the raw amino-acid sequence, 433 residues long: Serine hydroxymethyltransferase (433 aa).

122–124 contributes to the (6S)-5,6,7,8-tetrahydrofolate binding site; the sequence is AHV. The residue at position 228 (lysine 228) is an N6-(pyridoxal phosphate)lysine.

This sequence belongs to the SHMT family. In terms of assembly, homodimer. The cofactor is pyridoxal 5'-phosphate.

Its subcellular location is the cytoplasm. It participates in amino-acid biosynthesis; glycine biosynthesis; glycine from L-serine: step 1/1. Functionally, catalyzes the reversible interconversion of serine and glycine with a modified folate serving as the one-carbon carrier. Also exhibits a pteridine-independent aldolase activity toward beta-hydroxyamino acids, producing glycine and aldehydes, via a retro-aldol mechanism. This is Serine hydroxymethyltransferase from Sulfolobus acidocaldarius (strain ATCC 33909 / DSM 639 / JCM 8929 / NBRC 15157 / NCIMB 11770).